A 283-amino-acid polypeptide reads, in one-letter code: Bifunctional protein FolD (283 aa).

Residue 166-168 participates in NADP(+) binding; the sequence is GAS.

It belongs to the tetrahydrofolate dehydrogenase/cyclohydrolase family. In terms of assembly, homodimer.

It catalyses the reaction (6R)-5,10-methylene-5,6,7,8-tetrahydrofolate + NADP(+) = (6R)-5,10-methenyltetrahydrofolate + NADPH. It carries out the reaction (6R)-5,10-methenyltetrahydrofolate + H2O = (6R)-10-formyltetrahydrofolate + H(+). It functions in the pathway one-carbon metabolism; tetrahydrofolate interconversion. Catalyzes the oxidation of 5,10-methylenetetrahydrofolate to 5,10-methenyltetrahydrofolate and then the hydrolysis of 5,10-methenyltetrahydrofolate to 10-formyltetrahydrofolate. The polypeptide is Bifunctional protein FolD (Coxiella burnetii (strain Dugway 5J108-111)).